The sequence spans 588 residues: Proteasome-associated ATPase (588 aa).

Over residues 1–10 (MAAHDDDINR) the composition is skewed to basic and acidic residues. Residues 1–22 (MAAHDDDINRGTRPARGSEDPA) form a disordered region. Residues 47 to 94 (RILEERIVELQTNLAGVSAQNERLANTLREARDQIVALKEEVDRLAQP) are a coiled coil. 276 to 281 (GCGKTL) serves as a coordination point for ATP. The segment at 587–588 (YL) is docks into pockets in the proteasome alpha-ring.

The protein belongs to the AAA ATPase family. Homohexamer. Assembles into a hexameric ring structure that caps the 20S proteasome core. Strongly interacts with the prokaryotic ubiquitin-like protein Pup through a hydrophobic interface; the interacting region of ARC lies in its N-terminal coiled-coil domain. There is one Pup binding site per ARC hexamer ring. Upon ATP-binding, the C-terminus of ARC interacts with the alpha-rings of the proteasome core, possibly by binding to the intersubunit pockets.

It functions in the pathway protein degradation; proteasomal Pup-dependent pathway. In terms of biological role, ATPase which is responsible for recognizing, binding, unfolding and translocation of pupylated proteins into the bacterial 20S proteasome core particle. May be essential for opening the gate of the 20S proteasome via an interaction with its C-terminus, thereby allowing substrate entry and access to the site of proteolysis. Thus, the C-termini of the proteasomal ATPase may function like a 'key in a lock' to induce gate opening and therefore regulate proteolysis. This is Proteasome-associated ATPase from Streptomyces griseus subsp. griseus (strain JCM 4626 / CBS 651.72 / NBRC 13350 / KCC S-0626 / ISP 5235).